The sequence spans 208 residues: Thymidylate kinase (208 aa).

Gly10–Thr17 contributes to the ATP binding site.

The protein belongs to the thymidylate kinase family.

It catalyses the reaction dTMP + ATP = dTDP + ADP. Functionally, phosphorylation of dTMP to form dTDP in both de novo and salvage pathways of dTTP synthesis. This chain is Thymidylate kinase, found in Bacillus cereus (strain ATCC 10987 / NRS 248).